Here is a 384-residue protein sequence, read N- to C-terminus: Chorismate synthase (384 aa).

NADP(+)-binding residues include arginine 40 and arginine 46. FMN-binding positions include 128-130 (RAS), glycine 292, 307-311 (KPIPT), and arginine 333.

It belongs to the chorismate synthase family. In terms of assembly, homotetramer. It depends on FMNH2 as a cofactor.

It carries out the reaction 5-O-(1-carboxyvinyl)-3-phosphoshikimate = chorismate + phosphate. Its pathway is metabolic intermediate biosynthesis; chorismate biosynthesis; chorismate from D-erythrose 4-phosphate and phosphoenolpyruvate: step 7/7. In terms of biological role, catalyzes the anti-1,4-elimination of the C-3 phosphate and the C-6 proR hydrogen from 5-enolpyruvylshikimate-3-phosphate (EPSP) to yield chorismate, which is the branch point compound that serves as the starting substrate for the three terminal pathways of aromatic amino acid biosynthesis. This reaction introduces a second double bond into the aromatic ring system. This chain is Chorismate synthase, found in Carboxydothermus hydrogenoformans (strain ATCC BAA-161 / DSM 6008 / Z-2901).